Consider the following 337-residue polypeptide: L-Ala-D/L-amino acid epimerase (337 aa).

Residues threonine 129 and 151–153 (KIK) contribute to the substrate site. Mg(2+) is bound by residues aspartate 177, glutamate 203, and aspartate 228. Substrate-binding positions include lysine 250 and 300 to 302 (DMD).

The protein belongs to the mandelate racemase/muconate lactonizing enzyme family. The cofactor is Mg(2+).

In terms of biological role, broad specificity dipeptide epimerase. Catalyzes the epimerization of L-Ala-L-Ala, L-Ala-L-Glu, L-Ala-L-Ser, L-Ala-L-Thr and L-Ala-L-Met (in vitro). The polypeptide is L-Ala-D/L-amino acid epimerase (Maribacter sp. (strain HTCC2170 / KCCM 42371)).